Consider the following 42-residue polypeptide: Potassium channel toxin gamma-KTx 1.10 (42 aa).

4 disulfide bridges follow: C5–C23, C11–C34, C20–C39, and C24–C41.

As to expression, expressed by the venom gland.

The protein localises to the secreted. Its function is as follows. Blocks human Kv11.1/KCNH2/ERG1 potassium channels (reversible, IC(50)=3.4 nM). At high toxin concentrations, block of Kv11.1/KCNH2/ERG1 macroscopic current is almost complete. Does not accelerate the kinetics of the closing process and has no effect on the activation and inactivation kinetics of the Kv11.1/KCNH2/ERG1 channels. This Centruroides margaritatus (Central American bark Scorpion) protein is Potassium channel toxin gamma-KTx 1.10.